A 100-amino-acid polypeptide reads, in one-letter code: MNLSPREKDKLLISMAAIVARRRLDRGVKLNHPEAIAIISDFILEGARDGRTVAELMQSGAQVLTRDQVMPGIPEMIHDIQVEATFPDGTKLVTVHEPIR.

It belongs to the urease gamma subunit family. Heterotrimer of UreA (gamma), UreB (beta) and UreC (alpha) subunits. Three heterotrimers associate to form the active enzyme.

Its subcellular location is the cytoplasm. It carries out the reaction urea + 2 H2O + H(+) = hydrogencarbonate + 2 NH4(+). The protein operates within nitrogen metabolism; urea degradation; CO(2) and NH(3) from urea (urease route): step 1/1. The chain is Urease subunit gamma from Bradyrhizobium diazoefficiens (strain JCM 10833 / BCRC 13528 / IAM 13628 / NBRC 14792 / USDA 110).